The sequence spans 328 residues: Biotin synthase (328 aa).

Positions 49–273 constitute a Radical SAM core domain; that stretch reads FNKEKIETCS…ICISRIIMPE (225 aa). Positions 67, 71, and 74 each coordinate [4Fe-4S] cluster. Residues Ser-110, Cys-142, Cys-201, and Arg-277 each coordinate [2Fe-2S] cluster.

This sequence belongs to the radical SAM superfamily. Biotin synthase family. In terms of assembly, homodimer. [4Fe-4S] cluster is required as a cofactor. Requires [2Fe-2S] cluster as cofactor.

The enzyme catalyses (4R,5S)-dethiobiotin + (sulfur carrier)-SH + 2 reduced [2Fe-2S]-[ferredoxin] + 2 S-adenosyl-L-methionine = (sulfur carrier)-H + biotin + 2 5'-deoxyadenosine + 2 L-methionine + 2 oxidized [2Fe-2S]-[ferredoxin]. The protein operates within cofactor biosynthesis; biotin biosynthesis; biotin from 7,8-diaminononanoate: step 2/2. Its function is as follows. Catalyzes the conversion of dethiobiotin (DTB) to biotin by the insertion of a sulfur atom into dethiobiotin via a radical-based mechanism. The polypeptide is Biotin synthase (Methanococcus vannielii (strain ATCC 35089 / DSM 1224 / JCM 13029 / OCM 148 / SB)).